We begin with the raw amino-acid sequence, 230 residues long: Ethylene-responsive transcription factor ERF012 (230 aa).

Residues 1-17 (MVKQERKIQTSSTKKEM) show a composition bias toward basic and acidic residues. The segment at 1-51 (MVKQERKIQTSSTKKEMPLSSSPSSSSSSSSSSSSSSCKNKNKKSKIKKYK) is disordered. Over residues 20–39 (SSSPSSSSSSSSSSSSSSCK) the composition is skewed to low complexity. A compositionally biased stretch (basic residues) spans 40-51 (NKNKKSKIKKYK). Positions 49–106 (KYKGVRMRSWGSWVSEIRAPNQKTRIWLGSYSTAEAAARAYDVALLCLKGPQANLNFP) form a DNA-binding region, AP2/ERF.

The protein belongs to the AP2/ERF transcription factor family. ERF subfamily. Expressed cotyledons, ovules and seeds of immature siliques.

The protein resides in the nucleus. Transcriptional activator involved in the regulation of plant development and tolerance to abiotic stresses. Involved in salt and osmotic stress response pathways. May be regulated by the stress-related genes RD29A, RD22, DREB1A or P5CS during stress response. Binds to the GCC-box pathogenesis-related promoter element. May be involved in the regulation of gene expression by stress factors and by components of stress signal transduction pathways. This chain is Ethylene-responsive transcription factor ERF012 (ERF012), found in Arabidopsis thaliana (Mouse-ear cress).